Here is a 28-residue protein sequence, read N- to C-terminus: Cruzioseptin-10 (28 aa).

Expressed by the skin glands.

Its subcellular location is the secreted. In terms of biological role, has antimicrobial activity. This is Cruzioseptin-10 from Cruziohyla calcarifer (Splendid leaf frog).